The chain runs to 106 residues: Putative cytochrome c oxidase subunit 7A3, mitochondrial (106 aa).

The N-terminal 23 residues, 1–23 (MLWNLLALHQIGQRTISTASHRH), are a transit peptide targeting the mitochondrion.

Belongs to the cytochrome c oxidase VIIa family.

It is found in the mitochondrion inner membrane. The chain is Putative cytochrome c oxidase subunit 7A3, mitochondrial (COX7A2P2) from Homo sapiens (Human).